A 161-amino-acid polypeptide reads, in one-letter code: Nucleotide-binding protein Bcep18194_A5887 (161 aa).

This sequence belongs to the YajQ family.

Nucleotide-binding protein. This Burkholderia lata (strain ATCC 17760 / DSM 23089 / LMG 22485 / NCIMB 9086 / R18194 / 383) protein is Nucleotide-binding protein Bcep18194_A5887.